Here is a 1410-residue protein sequence, read N- to C-terminus: DNA-directed RNA polymerase subunit beta' (1410 aa).

Positions 70, 72, 85, and 88 each coordinate Zn(2+). Mg(2+)-binding residues include Asp460, Asp462, and Asp464. The Zn(2+) site is built by Cys814, Cys888, Cys895, and Cys898.

This sequence belongs to the RNA polymerase beta' chain family. In terms of assembly, the RNAP catalytic core consists of 2 alpha, 1 beta, 1 beta' and 1 omega subunit. When a sigma factor is associated with the core the holoenzyme is formed, which can initiate transcription. Requires Mg(2+) as cofactor. Zn(2+) is required as a cofactor.

It catalyses the reaction RNA(n) + a ribonucleoside 5'-triphosphate = RNA(n+1) + diphosphate. DNA-dependent RNA polymerase catalyzes the transcription of DNA into RNA using the four ribonucleoside triphosphates as substrates. The sequence is that of DNA-directed RNA polymerase subunit beta' from Saccharophagus degradans (strain 2-40 / ATCC 43961 / DSM 17024).